A 61-amino-acid chain; its full sequence is Defensin BmKDfsin1 (61 aa).

The N-terminal stretch at 1 to 25 (MKTIVLLFVLVLVFALLVKMGMVEA) is a signal peptide. 3 disulfide bridges follow: cysteine 29–cysteine 50, cysteine 36–cysteine 58, and cysteine 40–cysteine 60.

Belongs to the invertebrate defensin family. Type 2 subfamily. In terms of tissue distribution, highly expressed in non-venom gland (hemolymph) and moderately expressed in venom gland.

The protein resides in the secreted. Its function is as follows. Antibacterial peptide active against Gram-positive bacteria, but not on Gram-negative bacteria. Also has weak blocking activity on Kv1.1/KCNA1, Kv1.2/KCNA2, Kv1.3/KCNA3, KCa3.1/KCNN4/IK, KCa2.3/KCNN3/SK3 and Kv11.1/KCNH2/ERG1 channels (tested at 1 uM). It inhibits potassium channel current by interacting with the pore region. The protein is Defensin BmKDfsin1 of Olivierus martensii (Manchurian scorpion).